Consider the following 1128-residue polypeptide: Scavenger receptor cysteine-rich domain superfamily protein (1128 aa).

The signal sequence occupies residues 1-24 (MTSLRRGNICWVAVCAALLTLTRG). Topologically, residues 25 to 1051 (IDVIAKPSRT…VGAQAGPAGG (1027 aa)) are extracellular. SRCR domains follow at residues 40-140 (VQLV…VVCN), 143-245 (VRLA…VICT), 248-348 (IRLV…VICT), 351-450 (VRLV…AKCQ), 453-553 (VQLV…VVCR), 555-654 (IRLA…VVCR), 657-757 (LRLA…VVCT), 759-866 (LRLT…VLCK), and 868-968 (IRLV…VQCK). 21 disulfides stabilise this stretch: Cys65/Cys129, Cys78/Cys139, Cys109/Cys119, Cys168/Cys234, Cys181/Cys244, Cys212/Cys222, Cys273/Cys337, Cys286/Cys347, Cys316/Cys326, Cys376/Cys439, Cys389/Cys449, Cys419/Cys429, Cys478/Cys542, Cys491/Cys552, Cys522/Cys532, Cys583/Cys644, Cys596/Cys653, Cys624/Cys634, Cys682/Cys746, Cys695/Cys756, and Cys726/Cys736. Residue Asn87 is glycosylated (N-linked (GlcNAc...) asparagine). 2 N-linked (GlcNAc...) asparagine glycosylation sites follow: Asn190 and Asn194. Residue Asn229 is glycosylated (N-linked (GlcNAc...) asparagine). Residue Asn422 is glycosylated (N-linked (GlcNAc...) asparagine). Residues Asn601 and Asn612 are each glycosylated (N-linked (GlcNAc...) asparagine). 4 N-linked (GlcNAc...) asparagine glycosylation sites follow: Asn765, Asn808, Asn834, and Asn936. Cystine bridges form between Cys803-Cys865, Cys833-Cys843, Cys906-Cys967, Cys937-Cys947, Cys971-Cys1013, and Cys999-Cys1026. Residues 969 to 1028 (AGCDWPGPIRHGSFSPNRSSYDPLTTIDVKCDAGYELMGSKTLQCVTGCDWSRPTPECQR) enclose the Sushi domain. N-linked (GlcNAc...) asparagine glycosylation is present at Asn985. Asn1031 is a glycosylation site (N-linked (GlcNAc...) asparagine). Residues 1052–1072 (VMLIIGIILGAVVMMLIACVA) traverse the membrane as a helical segment. Topologically, residues 1073 to 1128 (LYLKGRNKNIGRGNPATTSAIWKPKKEFDELKEPVLSFSAMTAGGAGPEDGMGEDI) are cytoplasmic.

As to expression, from the mid-gastrula stage, expressed only in mesenchyme cells that are migrating toward the body wall. At the brachiolaria stage, expressed in presumptive coelomocytes of the coelomic pouch. Also expressed in adult coelomocytes (at protein level).

It is found in the cytoplasmic vesicle membrane. Its function is as follows. Involved in aggregate formation and phagocytosis by larval mesenchyme cells and adult coelomocytes. Binds to bacteria and may act as an opsonin in the innate immune system. The sequence is that of Scavenger receptor cysteine-rich domain superfamily protein from Patiria pectinifera (Starfish).